Consider the following 437-residue polypeptide: Inactive peptidyl-prolyl cis-trans isomerase shutdown (437 aa).

In terms of domain architecture, PPIase FKBP-type spans 92–178; the sequence is DSEVTIHYAA…RPEPALFVIV (87 aa). TPR repeat units lie at residues 209–242, 258–294, and 295–327; these read VNALRADAKELYKKKKYVKAIKNYQQAISVLRLS, VNAYLNLAVCYYKTNKPKHVLNMCECLDRLIDTEKHC, and KALYYYGKAHEMLGKTEMAIKYYKKALKLEPKN.

It belongs to the FKBP6 family. As to quaternary structure, interacts with Hsp83.

It localises to the cytoplasm. Its function is as follows. Co-chaperone required during oogenesis to repress transposable elements and prevent their mobilization, which is essential for the germline integrity. Acts via the piRNA metabolic process, which mediates the repression of transposable elements during meiosis by forming complexes composed of piRNAs and Piwi proteins and govern the methylation and subsequent repression of transposons. Acts as a co-chaperone via its interaction with Hsp83/HSP90 and is required for the biogenesis of all three piRNA major populations. The chain is Inactive peptidyl-prolyl cis-trans isomerase shutdown (shu) from Bombyx mori (Silk moth).